The chain runs to 290 residues: Inactive tau-tubulin kinase ttbk-6 (290 aa).

The Protein kinase domain maps to 1–240 (MEDHVLKKLN…FWQVMENEKI (240 aa)). 2 disordered regions span residues 244–263 (SKFDWENEEPDMSVPPAAWE) and 268–290 (RYFQSNPLEINGPPTPAEVDFVL).

It belongs to the protein kinase superfamily. CK1 Ser/Thr protein kinase family.

This is Inactive tau-tubulin kinase ttbk-6 from Caenorhabditis elegans.